The chain runs to 538 residues: MKAFPVICLGFAIFSSSICVNINILQQIGYIKQQVRQLSYYSQSSSSYVVVKLLPNIQPTDNSCEFKSVTQYNKTLSNLLLPIAENINNITSPSPGSRRHKRFAGIAIGIAALGVATAAQVTAAVSLVQAQTNARAIAAMKNSIQATNRAVFEVKEGTQQLAIAVQAIQDHINTIMNTQLNNMSCQILDNQLATSLGLYLTELTTVFRPQLINPALSPISIQALRSLLGSMTPAVVQATLSTSISAAEILSAGLMEGQIVSVLLDEMQMIVKINVPTIVTQSNALVIDFYSISSFINNQESIIQLPDRILEIGNEQWRYPAKNCKLTRHHIFCQYNEAERLSLETKLSVAGNISACVFSSIAGSYMRRFVALDGTIVANCRSLTCLCKSPSYPIYQPDHHAVTTIDLTSCQTLSLDGLDFSIVSLSNITYAENLTISLSQTINTQPIDISTELSKVNASLQNAVKYIKESNHQLQSVSVSSKIGAIIVAALVLSILSIIISLLFCFWAYIATKEIRRINFKTNHINTISSSVDDLIRY.

Residues 1–19 (MKAFPVICLGFAIFSSSIC) form the signal peptide. At 20-486 (VNINILQQIG…VSVSSKIGAI (467 aa)) the chain is on the extracellular side. N-linked (GlcNAc...) asparagine; by host glycans are attached at residues N56, N73, and N89. Positions 103–127 (FAGIAIGIAALGVATAAQVTAAVSL) are fusion peptide. Positions 128-156 (VQAQTNARAIAAMKNSIQATNRAVFEVKE) form a coiled coil. N182 carries N-linked (GlcNAc...) asparagine; by host glycosylation. C324 and C333 form a disulfide bridge. A glycan (N-linked (GlcNAc...) asparagine; by host) is linked at N352. Intrachain disulfides connect C380-C385 and C387-C410. N427, N433, and N457 each carry an N-linked (GlcNAc...) asparagine; by host glycan. The stretch at 452–477 (ELSKVNASLQNAVKYIKESNHQLQSV) forms a coiled coil. Residues 487–507 (IVAALVLSILSIIISLLFCFW) form a helical membrane-spanning segment. Residues 508-538 (AYIATKEIRRINFKTNHINTISSSVDDLIRY) are Cytoplasmic-facing.

It belongs to the paramyxoviruses fusion glycoprotein family. In terms of assembly, homotrimer; disulfide-linked F1-F2. Interacts with host LAMP1; LAMP2 and LAMP3; these interactions promote the cleavage of the viral fusion protein F. Post-translationally, the inactive precursor F0 is glycosylated and proteolytically cleaved into F1 and F2 to be functionally active. The cleavage is mediated by cellular proteases including host FURIN during the transport and maturation of the polypeptide.

Its subcellular location is the virion membrane. It localises to the host cell membrane. Class I viral fusion protein. Under the current model, the protein has at least 3 conformational states: pre-fusion native state, pre-hairpin intermediate state, and post-fusion hairpin state. During viral and plasma cell membrane fusion, the heptad repeat (HR) regions assume a trimer-of-hairpins structure, positioning the fusion peptide in close proximity to the C-terminal region of the ectodomain. The formation of this structure appears to drive apposition and subsequent fusion of viral and plasma cell membranes. Directs fusion of viral and cellular membranes leading to delivery of the nucleocapsid into the cytoplasm. This fusion is pH independent and occurs directly at the outer cell membrane. The trimer of F1-F2 (F protein) probably interacts with HN at the virion surface. Upon HN binding to its cellular receptor, the hydrophobic fusion peptide is unmasked and interacts with the cellular membrane, inducing the fusion between cell and virion membranes. Later in infection, F proteins expressed at the plasma membrane of infected cells could mediate fusion with adjacent cells to form syncytia, a cytopathic effect that could lead to tissue necrosis. This Homo sapiens (Human) protein is Fusion glycoprotein F0 (F).